Consider the following 358-residue polypeptide: Cytoplasmic dynein 2 light intermediate chain 1 (358 aa).

2 disordered regions span residues 1 to 35 (MPKVSSDTLWDIAAAEVRSRESRTDEEEAEEEDAH) and 307 to 358 (ESTR…ALDP). The span at 24–33 (TDEEEAEEED) shows a compositional bias: acidic residues. Composition is skewed to basic and acidic residues over residues 307 to 320 (ESTRERKELKDPVK) and 333 to 349 (RAQKDQELDQYKREQAK).

It belongs to the dynein light intermediate chain family. In terms of assembly, light intermediate chain of the cytoplasmic dynein complex 2, a multisubunit complex composed at least of eleven different proteins. The cytoplasmic dynein 2 complex consists of two catalytic heavy chains (HCs) and a number of non-catalytic subunits presented by intermediate chains (ICs), light intermediate chains (LICs) and light chains (LCs). Among them, a heavy chain (DYNC2H1), two intermediate chains (DYNC2I2 and DYNC2I1), a light intermediate chain (DYNC2LI1), and a light chain (DYNLT2B) are unique to the dynein-2 complex, but a subset of light chains are also shared by dynein-1 and dynein-2 complexes. Dynein-2 complex is built around two copies of cytoplasmic dynein 2 heavy chain 1 (DYNC2H1). The C-terminal region forms the motor domain, which converts the energy from ATP hydrolysis into movement. Its N-terminal region forms the tail, an extended structure that binds the other subunits and holds the two heavy chains in a homodimer.

Its subcellular location is the cytoplasm. It localises to the cell projection. The protein resides in the cilium. The protein localises to the cytoskeleton. It is found in the cilium basal body. Its subcellular location is the cilium axoneme. It localises to the microtubule organizing center. The protein resides in the centrosome. Functionally, acts as one of several non-catalytic accessory components of the cytoplasmic dynein 2 complex (dynein-2 complex), a motor protein complex that drives the movement of cargos along microtubules within cilia and flagella in concert with the intraflagellar transport (IFT) system, facilitating the assembly of these organelles. This is Cytoplasmic dynein 2 light intermediate chain 1 (dync2li1) from Danio rerio (Zebrafish).